The chain runs to 298 residues: MANAKEIRGQIKSVKNTRKITRAMEMVAASKMRRAQERMRAARPCAEKIREVLGHLAQAHPEYEHPLMQVRPVKKAGFLVVTTDRGLCGGLNVNVLRNVVQKMRELHEEGVESNLAVVGNKGLGFLRRHGAHLVADVNGLGDSPHLGDMIGPIRAMADAYAKGEVDVVYLVSSRFVNTMLQRATVEQLLPVEKPTASAEQRAELWDYIYEPEARPVLDRLMQRYVESVVYQAVIEHLACEQSARMVAMKSASDNAKRMVDDLQLAYNKARQAAITQEIAEISAGAARFDDCAQHFWKF.

The protein belongs to the ATPase gamma chain family. In terms of assembly, F-type ATPases have 2 components, CF(1) - the catalytic core - and CF(0) - the membrane proton channel. CF(1) has five subunits: alpha(3), beta(3), gamma(1), delta(1), epsilon(1). CF(0) has three main subunits: a, b and c.

The protein resides in the cell inner membrane. Functionally, produces ATP from ADP in the presence of a proton gradient across the membrane. The gamma chain is believed to be important in regulating ATPase activity and the flow of protons through the CF(0) complex. In Acidithiobacillus ferridurans, this protein is ATP synthase gamma chain.